The sequence spans 146 residues: Transcriptional regulator MraZ (146 aa).

SpoVT-AbrB domains are found at residues asparagine 7–leucine 54 and glycine 83–alanine 126.

Belongs to the MraZ family. As to quaternary structure, forms oligomers.

Its subcellular location is the cytoplasm. It localises to the nucleoid. This Rhizobium rhizogenes (strain K84 / ATCC BAA-868) (Agrobacterium radiobacter) protein is Transcriptional regulator MraZ.